The sequence spans 143 residues: Peptide methionine sulfoxide reductase MsrB (143 aa).

The 123-residue stretch at 5–127 folds into the MsrB domain; the sequence is KEKRLKELNR…NSAALKFIPK (123 aa). The active-site Nucleophile is the cysteine 116.

It belongs to the MsrB Met sulfoxide reductase family.

The enzyme catalyses L-methionyl-[protein] + [thioredoxin]-disulfide + H2O = L-methionyl-(R)-S-oxide-[protein] + [thioredoxin]-dithiol. The polypeptide is Peptide methionine sulfoxide reductase MsrB (Bacillus pumilus (strain SAFR-032)).